Consider the following 716-residue polypeptide: Polyribonucleotide nucleotidyltransferase (716 aa).

Aspartate 480 and aspartate 486 together coordinate Mg(2+). The region spanning 547 to 606 (PKIVQLQIDIDKISLVIGSTGKTVKAITDEFEVKVQIEQNGKIILFGDDDFKMQKAKERI) is the KH domain. Positions 616-711 (GEIYEGTVKK…KFGKIDLEIV (96 aa)) constitute an S1 motif domain.

This sequence belongs to the polyribonucleotide nucleotidyltransferase family. It depends on Mg(2+) as a cofactor.

The protein localises to the cytoplasm. It carries out the reaction RNA(n+1) + phosphate = RNA(n) + a ribonucleoside 5'-diphosphate. Its function is as follows. Involved in mRNA degradation. Catalyzes the phosphorolysis of single-stranded polyribonucleotides processively in the 3'- to 5'-direction. The protein is Polyribonucleotide nucleotidyltransferase of Borreliella burgdorferi (strain ATCC 35210 / DSM 4680 / CIP 102532 / B31) (Borrelia burgdorferi).